The primary structure comprises 247 residues: tRNA pseudouridine synthase A 1 (247 aa).

Catalysis depends on aspartate 53, which acts as the Nucleophile. Tyrosine 111 is a binding site for substrate.

Belongs to the tRNA pseudouridine synthase TruA family. Homodimer.

It carries out the reaction uridine(38/39/40) in tRNA = pseudouridine(38/39/40) in tRNA. Its function is as follows. Formation of pseudouridine at positions 38, 39 and 40 in the anticodon stem and loop of transfer RNAs. In Bacillus cereus (strain ATCC 10987 / NRS 248), this protein is tRNA pseudouridine synthase A 1.